The following is a 73-amino-acid chain: Antimicrobial peptide TsAP-2 (73 aa).

The N-terminal stretch at 1-22 (MQIKHLITIFFLVLIVADHCHA) is a signal peptide. At Lys-39 the chain carries Lysine amide. A propeptide spanning residues 45-73 (EITSQIEQYRNLQKREAELENLLANLPVY) is cleaved from the precursor.

The protein belongs to the non-disulfide-bridged peptide (NDBP) superfamily. Short antimicrobial peptide (group 4) family. In terms of tissue distribution, expressed by the venom gland.

The protein resides in the secreted. Functionally, antimicrobial peptide. Has a high antibacterial activity against the Gram-positive bacterium S.aureus (MIC=5-17.30 uM), the methicillin-resistant S.aureus (MRSA) (MIC=17.30 uM), and E.faecalis (MIC=69.23 uM). Has antifungal activity against Candida spp. and one Cryptococcus neoformans strains with MICs values ranging from 6.25 to 100 uM. Also shows an inhibitory activity on C.albicans biofilms at high concentrations. Has a moderate hemolytic potency (18% at 20 uM). Also inhibits the growth of the five human cancer cell lines tested (the squamous carcinoma cell line H157 (IC(50)=4.1 uM), the lung adenocarcinoma cell line H838 (11.0 uM), the breast carcinoma cell line MCF-7 (6.4 uM), the androgen-independent prostate adenocarcinoma cell line PC3 (13.3 uM) and the glioblastoma cell line U251-MG (15.4 uM)). In the model of polymicrobial sepsis, it exhibits an antibiotic effect, reducing the levels of microorganisms in the infectious focus and the inflammatory responses in the lung and cecum of septic animals. The protein is Antimicrobial peptide TsAP-2 of Tityus serrulatus (Brazilian scorpion).